We begin with the raw amino-acid sequence, 296 residues long: Bifunctional protein FolD (296 aa).

Residues 166–168 (GRS), serine 195, and isoleucine 236 each bind NADP(+).

This sequence belongs to the tetrahydrofolate dehydrogenase/cyclohydrolase family. In terms of assembly, homodimer.

The catalysed reaction is (6R)-5,10-methylene-5,6,7,8-tetrahydrofolate + NADP(+) = (6R)-5,10-methenyltetrahydrofolate + NADPH. It catalyses the reaction (6R)-5,10-methenyltetrahydrofolate + H2O = (6R)-10-formyltetrahydrofolate + H(+). It functions in the pathway one-carbon metabolism; tetrahydrofolate interconversion. In terms of biological role, catalyzes the oxidation of 5,10-methylenetetrahydrofolate to 5,10-methenyltetrahydrofolate and then the hydrolysis of 5,10-methenyltetrahydrofolate to 10-formyltetrahydrofolate. This is Bifunctional protein FolD from Chlorobium limicola (strain DSM 245 / NBRC 103803 / 6330).